Consider the following 394-residue polypeptide: Flap endonuclease 1-A (394 aa).

Positions 1-105 are N-domain; sequence MGIKGLTKLI…RELAKRFARR (105 aa). Aspartate 34 serves as a coordination point for Mg(2+). Arginine 71 provides a ligand contact to DNA. 5 residues coordinate Mg(2+): aspartate 87, glutamate 159, glutamate 161, aspartate 180, and aspartate 182. The interval 123–254 is I-domain; it reads DVEKYSKKTV…QTALKMIRQH (132 aa). Glutamate 159 contributes to the DNA binding site. DNA-binding residues include glycine 232 and aspartate 234. Residue aspartate 234 participates in Mg(2+) binding. The interaction with PCNA stretch occupies residues 338–346; that stretch reads SQGRLESFF. Positions 343–394 are disordered; the sequence is ESFFGVSSSSSNKRKEAPDSEASAGKQVKTAAAVKPAKAASKKGPAKGGKKK. A compositionally biased stretch (low complexity) spans 368–381; sequence KQVKTAAAVKPAKA. The segment covering 382 to 394 has biased composition (basic residues); that stretch reads ASKKGPAKGGKKK.

It belongs to the XPG/RAD2 endonuclease family. FEN1 subfamily. In terms of assembly, interacts with PCNA. Three molecules of FEN1 bind to one PCNA trimer with each molecule binding to one PCNA monomer. PCNA stimulates the nuclease activity without altering cleavage specificity. It depends on Mg(2+) as a cofactor. Post-translationally, phosphorylated. Phosphorylation upon DNA damage induces relocalization to the nuclear plasma.

The protein resides in the nucleus. Its subcellular location is the nucleolus. The protein localises to the nucleoplasm. It is found in the mitochondrion. Structure-specific nuclease with 5'-flap endonuclease and 5'-3' exonuclease activities involved in DNA replication and repair. During DNA replication, cleaves the 5'-overhanging flap structure that is generated by displacement synthesis when DNA polymerase encounters the 5'-end of a downstream Okazaki fragment. It enters the flap from the 5'-end and then tracks to cleave the flap base, leaving a nick for ligation. Also involved in the long patch base excision repair (LP-BER) pathway, by cleaving within the apurinic/apyrimidinic (AP) site-terminated flap. Acts as a genome stabilization factor that prevents flaps from equilibrating into structures that lead to duplications and deletions. Also possesses 5'-3' exonuclease activity on nicked or gapped double-stranded DNA, and exhibits RNase H activity. Also involved in replication and repair of rDNA and in repairing mitochondrial DNA. The protein is Flap endonuclease 1-A of Physcomitrium patens (Spreading-leaved earth moss).